The sequence spans 363 residues: 3-dehydroquinate synthase (363 aa).

NAD(+)-binding positions include 72-77, 106-110, 130-131, Lys142, and Lys151; these read SGEQSK, GVIGD, and TT. 3 residues coordinate Zn(2+): Glu184, His246, and His263.

Belongs to the sugar phosphate cyclases superfamily. Dehydroquinate synthase family. Requires Co(2+) as cofactor. The cofactor is Zn(2+). NAD(+) serves as cofactor.

It is found in the cytoplasm. The catalysed reaction is 7-phospho-2-dehydro-3-deoxy-D-arabino-heptonate = 3-dehydroquinate + phosphate. It participates in metabolic intermediate biosynthesis; chorismate biosynthesis; chorismate from D-erythrose 4-phosphate and phosphoenolpyruvate: step 2/7. Catalyzes the conversion of 3-deoxy-D-arabino-heptulosonate 7-phosphate (DAHP) to dehydroquinate (DHQ). The sequence is that of 3-dehydroquinate synthase from Bacillus pumilus (strain SAFR-032).